A 502-amino-acid polypeptide reads, in one-letter code: ATP synthase subunit alpha (502 aa).

The tract at residues 117–139 (GMGPVLTSKTRPIESPAPGVMDR) is disordered. Residue 169–176 (GDRQTGKT) participates in ATP binding.

This sequence belongs to the ATPase alpha/beta chains family. F-type ATPases have 2 components, CF(1) - the catalytic core - and CF(0) - the membrane proton channel. CF(1) has five subunits: alpha(3), beta(3), gamma(1), delta(1), epsilon(1). CF(0) has three main subunits: a(1), b(2) and c(9-12). The alpha and beta chains form an alternating ring which encloses part of the gamma chain. CF(1) is attached to CF(0) by a central stalk formed by the gamma and epsilon chains, while a peripheral stalk is formed by the delta and b chains.

Its subcellular location is the cell membrane. The enzyme catalyses ATP + H2O + 4 H(+)(in) = ADP + phosphate + 5 H(+)(out). Functionally, produces ATP from ADP in the presence of a proton gradient across the membrane. The alpha chain is a regulatory subunit. The polypeptide is ATP synthase subunit alpha (Bacillus licheniformis (strain ATCC 14580 / DSM 13 / JCM 2505 / CCUG 7422 / NBRC 12200 / NCIMB 9375 / NCTC 10341 / NRRL NRS-1264 / Gibson 46)).